The following is a 98-amino-acid chain: U11-barytoxin-Tl1b (98 aa).

An N-terminal signal peptide occupies residues 1–21 (MKTLVLVAVLGLASLYLLSYA). A propeptide spanning residues 22–50 (SEVQQLSRDEEEFRALVASFGGLFDTEER) is cleaved from the precursor. 3 disulfide bridges follow: cysteine 57–cysteine 71, cysteine 64–cysteine 76, and cysteine 70–cysteine 89.

This sequence belongs to the neurotoxin 10 (Hwtx-1) family. 25 (ICK4) subfamily. In terms of tissue distribution, expressed by the venom gland.

It is found in the secreted. Ion channel inhibitor. The chain is U11-barytoxin-Tl1b from Trittame loki (Brush-footed trapdoor spider).